Here is a 153-residue protein sequence, read N- to C-terminus: Transcriptional repressor NrdR (153 aa).

A zinc finger spans residues 3–34 (CPSCHHSGTRVLESRPVEEGRSIRRRRECEQC). The region spanning 49-139 (LIVVKKEGTR…VYRQFKDINV (91 aa)) is the ATP-cone domain.

It belongs to the NrdR family. Requires Zn(2+) as cofactor.

Negatively regulates transcription of bacterial ribonucleotide reductase nrd genes and operons by binding to NrdR-boxes. The chain is Transcriptional repressor NrdR from Geobacillus kaustophilus (strain HTA426).